The following is a 95-amino-acid chain: MSYTINAVTRTEIGKGSSRRLRHAGKVPAVIYGPGKEPVSIKFEHKDIINIQLNDDFYTTDLTVSIEGKEVKVRVKAIQRHAFKQLVEHIDFMFA.

It belongs to the bacterial ribosomal protein bL25 family. Part of the 50S ribosomal subunit; part of the 5S rRNA/L5/L18/L25 subcomplex. Contacts the 5S rRNA. Binds to the 5S rRNA independently of L5 and L18.

In terms of biological role, this is one of the proteins that binds to the 5S RNA in the ribosome where it forms part of the central protuberance. The sequence is that of Large ribosomal subunit protein bL25 from Shewanella frigidimarina (strain NCIMB 400).